Here is a 367-residue protein sequence, read N- to C-terminus: Glutamate 5-kinase (367 aa).

ATP is bound at residue K10. Substrate is bound by residues S50, D137, and N149. ATP contacts are provided by residues 169–170 (TD) and 211–217 (TGGMGTK). The region spanning 275 to 353 (AGEITVDEGA…QQIDAILGYE (79 aa)) is the PUA domain.

The protein belongs to the glutamate 5-kinase family.

The protein localises to the cytoplasm. It carries out the reaction L-glutamate + ATP = L-glutamyl 5-phosphate + ADP. The protein operates within amino-acid biosynthesis; L-proline biosynthesis; L-glutamate 5-semialdehyde from L-glutamate: step 1/2. Its function is as follows. Catalyzes the transfer of a phosphate group to glutamate to form L-glutamate 5-phosphate. The sequence is that of Glutamate 5-kinase from Citrobacter koseri (strain ATCC BAA-895 / CDC 4225-83 / SGSC4696).